The following is a 270-amino-acid chain: Pyrroline-5-carboxylate reductase (270 aa).

It belongs to the pyrroline-5-carboxylate reductase family.

It is found in the cytoplasm. The catalysed reaction is L-proline + NADP(+) = (S)-1-pyrroline-5-carboxylate + NADPH + 2 H(+). The enzyme catalyses L-proline + NAD(+) = (S)-1-pyrroline-5-carboxylate + NADH + 2 H(+). It participates in amino-acid biosynthesis; L-proline biosynthesis; L-proline from L-glutamate 5-semialdehyde: step 1/1. In terms of biological role, catalyzes the reduction of 1-pyrroline-5-carboxylate (PCA) to L-proline. The protein is Pyrroline-5-carboxylate reductase of Methanosarcina acetivorans (strain ATCC 35395 / DSM 2834 / JCM 12185 / C2A).